Consider the following 179-residue polypeptide: Replication restart protein DnaT (179 aa).

Residues Gly-156–Gly-179 form a disordered region.

This sequence belongs to the DnaT family. In terms of assembly, homooligomerizes. Interacts with PriB. Component of the replication restart primosome. Primosome assembly occurs via a 'hand-off' mechanism. PriA binds to replication forks, subsequently PriB then DnaT bind; DnaT then displaces ssDNA to generate the helicase loading substrate.

Functionally, involved in the restart of stalled replication forks, which reloads the replicative helicase on sites other than the origin of replication. Can function in multiple replication restart pathways. Displaces ssDNA from a PriB-ssDNA complex. Probably forms a spiral filament on ssDNA. In Escherichia coli O157:H7, this protein is Replication restart protein DnaT.